A 187-amino-acid polypeptide reads, in one-letter code: Large ribosomal subunit protein bL17 (187 aa).

Positions 122–187 (PKVRSSRTST…EADAAEKSDK (66 aa)) are disordered. Residues 127–144 (SRTSTATAPVAAAPVAEA) are compositionally biased toward low complexity. Residues 145-157 (PAEESDVPVEETD) show a composition bias toward acidic residues. The span at 167–176 (AETTDAAAAE) shows a compositional bias: low complexity.

It belongs to the bacterial ribosomal protein bL17 family. Part of the 50S ribosomal subunit. Contacts protein L32.

The chain is Large ribosomal subunit protein bL17 from Clavibacter sepedonicus (Clavibacter michiganensis subsp. sepedonicus).